The following is a 354-amino-acid chain: Ornithine transcarbamylase, mitochondrial (354 aa).

The N-terminal 32 residues, 1–32, are a transit peptide targeting the mitochondrion; sequence MLSNLRILLNNAALRKGHTSVVRHFWCGKPVQ. The residue at position 70 (Lys-70) is an N6-acetyllysine; alternate. Lys-70 carries the N6-succinyllysine; alternate modification. An N6-succinyllysine modification is found at Lys-80. An N6-acetyllysine; alternate modification is found at Lys-88. N6-succinyllysine; alternate is present on Lys-88. 90–94 contributes to the carbamoyl phosphate binding site; sequence STRTR. Ser-133 carries the phosphoserine modification. Residue Arg-141 participates in carbamoyl phosphate binding. Arg-141 contributes to the L-ornithine binding site. Lys-144 carries the post-translational modification N6-acetyllysine; alternate. The residue at position 144 (Lys-144) is an N6-succinyllysine; alternate. Residue His-168 coordinates carbamoyl phosphate. Asn-199 contacts L-ornithine. N6-acetyllysine; alternate occurs at positions 221, 231, and 238. An N6-succinyllysine; alternate mark is found at Lys-221, Lys-231, and Lys-238. Position 243 is an N6-acetyllysine (Lys-243). 263 to 267 is an L-ornithine binding site; the sequence is DTWIS. Lys-274 and Lys-289 each carry N6-succinyllysine. At Lys-292 the chain carries N6-acetyllysine; alternate. At Lys-292 the chain carries N6-succinyllysine; alternate. Position 302–305 (302–305) interacts with L-ornithine; sequence HCLP. Cys-303 is an active-site residue. Lys-307 is subject to N6-acetyllysine; alternate. The residue at position 307 (Lys-307) is an N6-succinyllysine; alternate. Position 330 (Arg-330) interacts with carbamoyl phosphate. Arg-330 provides a ligand contact to L-ornithine.

The protein belongs to the aspartate/ornithine carbamoyltransferase superfamily. OTCase family. As to quaternary structure, homotrimer. In terms of processing, acetylation at Lys-88 negatively regulates ornithine carbamoyltransferase activity in response to nutrient signals.

The protein localises to the mitochondrion matrix. The catalysed reaction is carbamoyl phosphate + L-ornithine = L-citrulline + phosphate + H(+). It participates in nitrogen metabolism; urea cycle; L-citrulline from L-ornithine and carbamoyl phosphate: step 1/1. With respect to regulation, negatively regulated by lysine acetylation. Catalyzes the second step of the urea cycle, the condensation of carbamoyl phosphate with L-ornithine to form L-citrulline. The urea cycle ensures the detoxification of ammonia by converting it to urea for excretion. The chain is Ornithine transcarbamylase, mitochondrial from Mus musculus (Mouse).